The following is a 95-amino-acid chain: Protein RALF-like 16 (95 aa).

An N-terminal signal peptide occupies residues 1–29 (MVAYEKSPIVFLFATMMLVMFLFCGSGEA). Intrachain disulfides connect C45–C53 and C65–C71.

Belongs to the plant rapid alkalinization factor (RALF) family.

It localises to the secreted. Cell signaling peptide that may regulate plant stress, growth, and development. Mediates a rapid alkalinization of extracellular space by mediating a transient increase in the cytoplasmic Ca(2+) concentration leading to a calcium-dependent signaling events through a cell surface receptor and a concomitant activation of some intracellular mitogen-activated protein kinases. The sequence is that of Protein RALF-like 16 (RALFL16) from Arabidopsis thaliana (Mouse-ear cress).